Here is a 298-residue protein sequence, read N- to C-terminus: Small ribosomal subunit protein uS3 (298 aa).

The 69-residue stretch at 39 to 107 (VREYLKAKLK…PVAVNIEEVR (69 aa)) folds into the KH type-2 domain. A disordered region spans residues 214–298 (PAAVEARTDE…PAAAADGKGE (85 aa)). Positions 219-245 (ARTDEERRPRGPRRDDRGARPGADRPA) are enriched in basic and acidic residues. Over residues 277-298 (KPAVQRVRKVAAPAAAADGKGE) the composition is skewed to low complexity.

This sequence belongs to the universal ribosomal protein uS3 family. Part of the 30S ribosomal subunit. Forms a tight complex with proteins S10 and S14.

Binds the lower part of the 30S subunit head. Binds mRNA in the 70S ribosome, positioning it for translation. The protein is Small ribosomal subunit protein uS3 of Albidiferax ferrireducens (strain ATCC BAA-621 / DSM 15236 / T118) (Rhodoferax ferrireducens).